The following is a 361-amino-acid chain: tRNA-specific 2-thiouridylase MnmA (361 aa).

ATP contacts are provided by residues 6–13 and Ile32; that span reads LVSGGVDS. The tract at residues 93-95 is interaction with target base in tRNA; sequence NPD. The Nucleophile role is filled by Cys98. Cysteines 98 and 193 form a disulfide. Position 121 (Gly121) interacts with ATP. The interval 143–145 is interaction with tRNA; it reads KDQ. Cys193 (cysteine persulfide intermediate) is an active-site residue.

This sequence belongs to the MnmA/TRMU family.

The protein resides in the cytoplasm. It catalyses the reaction S-sulfanyl-L-cysteinyl-[protein] + uridine(34) in tRNA + AH2 + ATP = 2-thiouridine(34) in tRNA + L-cysteinyl-[protein] + A + AMP + diphosphate + H(+). Functionally, catalyzes the 2-thiolation of uridine at the wobble position (U34) of tRNA, leading to the formation of s(2)U34. The chain is tRNA-specific 2-thiouridylase MnmA from Porphyromonas gingivalis (strain ATCC 33277 / DSM 20709 / CIP 103683 / JCM 12257 / NCTC 11834 / 2561).